Consider the following 267-residue polypeptide: tRNA pseudouridine synthase A (267 aa).

Asp55 serves as the catalytic Nucleophile. Position 109 (Tyr109) interacts with substrate.

It belongs to the tRNA pseudouridine synthase TruA family.

The enzyme catalyses uridine(38/39/40) in tRNA = pseudouridine(38/39/40) in tRNA. In terms of biological role, formation of pseudouridine at positions 38, 39 and 40 in the anticodon stem and loop of transfer RNAs. This chain is tRNA pseudouridine synthase A, found in Natronomonas pharaonis (strain ATCC 35678 / DSM 2160 / CIP 103997 / JCM 8858 / NBRC 14720 / NCIMB 2260 / Gabara) (Halobacterium pharaonis).